The following is an 850-amino-acid chain: Pierisin (850 aa).

Ricin B-type lectin domains lie at G267 to I409, F413 to K560, and Y564 to K707.

It belongs to the pierisin ADP-ribosyltransferase family.

It carries out the reaction a 2'-deoxyguanosine in DNA + NAD(+) = an N(2)-(ADP-L-ribosyl)-2'-deoxyguanosine in DNA + nicotinamide + H(+). ADP-ribosylates double-stranded DNA by targeting the N2 amino group of dG residues. Induces apoptosis in a range of human cell lines. May play a role in destroying cells during pupation and/or defense against parasites. This Pieris brassicae (White butterfly) protein is Pierisin.